The primary structure comprises 347 residues: uncharacterized protein (347 aa).

This is an uncharacterized protein from Mycoplasma genitalium (strain ATCC 33530 / DSM 19775 / NCTC 10195 / G37) (Mycoplasmoides genitalium).